The following is a 211-amino-acid chain: ATP phosphoribosyltransferase (211 aa).

The protein belongs to the ATP phosphoribosyltransferase family. Short subfamily. Heteromultimer composed of HisG and HisZ subunits.

It localises to the cytoplasm. The enzyme catalyses 1-(5-phospho-beta-D-ribosyl)-ATP + diphosphate = 5-phospho-alpha-D-ribose 1-diphosphate + ATP. Its pathway is amino-acid biosynthesis; L-histidine biosynthesis; L-histidine from 5-phospho-alpha-D-ribose 1-diphosphate: step 1/9. Its function is as follows. Catalyzes the condensation of ATP and 5-phosphoribose 1-diphosphate to form N'-(5'-phosphoribosyl)-ATP (PR-ATP). Has a crucial role in the pathway because the rate of histidine biosynthesis seems to be controlled primarily by regulation of HisG enzymatic activity. The chain is ATP phosphoribosyltransferase from Pseudomonas fluorescens (strain ATCC BAA-477 / NRRL B-23932 / Pf-5).